The chain runs to 102 residues: Small ribosomal subunit protein uS10 (102 aa).

Belongs to the universal ribosomal protein uS10 family. As to quaternary structure, part of the 30S ribosomal subunit.

Its function is as follows. Involved in the binding of tRNA to the ribosomes. In Nocardioides sp. (strain ATCC BAA-499 / JS614), this protein is Small ribosomal subunit protein uS10.